A 464-amino-acid chain; its full sequence is Protein FAM90A12 (464 aa).

3 disordered regions span residues Met-1–Leu-42, Pro-70–Ala-389, and Ala-411–Pro-437. Composition is skewed to basic and acidic residues over residues Gly-74 to Ala-89 and Asn-97 to Arg-114. Residues Leu-180 to Leu-197 are compositionally biased toward low complexity.

This sequence belongs to the FAM90 family.

In Homo sapiens (Human), this protein is Protein FAM90A12.